The sequence spans 81 residues: Omega-conotoxin-like TxMKLT1-0223 (81 aa).

Residues M1–A22 form the signal peptide. A propeptide spanning residues V23–R52 is cleaved from the precursor. Disulfide bonds link C55/C72, C62/C76, and C71/C80.

This sequence belongs to the conotoxin O1 superfamily. In terms of tissue distribution, expressed by the venom duct.

It localises to the secreted. Omega-conotoxins act at presynaptic membranes, they bind and block voltage-gated calcium channels (Cav). In Conus textile (Cloth-of-gold cone), this protein is Omega-conotoxin-like TxMKLT1-0223.